Here is a 185-residue protein sequence, read N- to C-terminus: Ribosome-recycling factor (185 aa).

The protein belongs to the RRF family.

The protein resides in the cytoplasm. Its function is as follows. Responsible for the release of ribosomes from messenger RNA at the termination of protein biosynthesis. May increase the efficiency of translation by recycling ribosomes from one round of translation to another. The chain is Ribosome-recycling factor from Shouchella clausii (strain KSM-K16) (Alkalihalobacillus clausii).